The sequence spans 1184 residues: Probable phospholipid-transporting ATPase 12 (1184 aa).

Residues 1 to 75 (MATVSGRRRK…TTKYTLATFL (75 aa)) lie on the Cytoplasmic side of the membrane. A helical membrane pass occupies residues 76–97 (PKSLFEQFRRVANFYFLVVGIL). Residues 98-101 (SFTP) are Extracellular-facing. The helical transmembrane segment at 102-124 (LAPYTAVSAIVPLTFVILATMFK) threads the bilayer. Topologically, residues 125–306 (EGVEDWRRKQ…SMIERKMDKI (182 aa)) are cytoplasmic. Residues 307-328 (IYLMFLMVFSLAFFGSVLFGIW) traverse the membrane as a helical segment. The Extracellular portion of the chain corresponds to 329-364 (TRDDFQNGVMERWYLKPDDSSIFFDPKRAPMAAIYH). A helical transmembrane segment spans residues 365–382 (FLTALMLNSYFIPISLYV). Residues 383–921 (SIEIVKVLQS…HGHWCYRRIS (539 aa)) are Cytoplasmic-facing. The 4-aspartylphosphate intermediate role is filled by Asp-430. The Mg(2+) site is built by Asp-866 and Asp-870. Residues 922 to 941 (KMICYFFYKNITFGFTLFLY) form a helical membrane-spanning segment. The Extracellular segment spans residues 942–955 (EAYTSFSATPAYND). The chain crosses the membrane as a helical span at residues 956-975 (WYLSLYSVFFTSLPVICLGI). Over 976-1005 (FDQDVSAPFCLKFPVLYQEGVQNLLFSWRR) the chain is Cytoplasmic. A helical transmembrane segment spans residues 1006 to 1028 (ILSWMFHGFCSAIIIFFLCKTSL). The Extracellular portion of the chain corresponds to 1029-1041 (ESQAFNHEGKTAG). Residues 1042 to 1064 (RDILGGTMYTCVVWVVSLQMVLT) form a helical membrane-spanning segment. Over 1065 to 1070 (ISYFTL) the chain is Cytoplasmic. The helical transmembrane segment at 1071–1091 (IQHVVVWGSVVIWYLFLMVYG) threads the bilayer. Residues 1092 to 1108 (SLPIRMSTDAYMVFLEA) are Extracellular-facing. A helical transmembrane segment spans residues 1109 to 1133 (LAPAPSYWITTLFVVLSTMMPYFIF). Topologically, residues 1134-1184 (SAIQMRFFPMSHGTVQLLRYEDQCSNSGNFEMGRQGSVRPTLVMRSHQPES) are cytoplasmic.

Belongs to the cation transport ATPase (P-type) (TC 3.A.3) family. Type IV subfamily.

It is found in the membrane. It carries out the reaction ATP + H2O + phospholipidSide 1 = ADP + phosphate + phospholipidSide 2.. Involved in transport of phospholipids. The sequence is that of Probable phospholipid-transporting ATPase 12 from Arabidopsis thaliana (Mouse-ear cress).